A 513-amino-acid polypeptide reads, in one-letter code: ATP synthase subunit alpha (513 aa).

169–176 is a binding site for ATP; it reads GDRQTGKT.

Belongs to the ATPase alpha/beta chains family. As to quaternary structure, F-type ATPases have 2 components, CF(1) - the catalytic core - and CF(0) - the membrane proton channel. CF(1) has five subunits: alpha(3), beta(3), gamma(1), delta(1), epsilon(1). CF(0) has three main subunits: a(1), b(2) and c(9-12). The alpha and beta chains form an alternating ring which encloses part of the gamma chain. CF(1) is attached to CF(0) by a central stalk formed by the gamma and epsilon chains, while a peripheral stalk is formed by the delta and b chains.

It is found in the cell inner membrane. It catalyses the reaction ATP + H2O + 4 H(+)(in) = ADP + phosphate + 5 H(+)(out). Its function is as follows. Produces ATP from ADP in the presence of a proton gradient across the membrane. The alpha chain is a regulatory subunit. The protein is ATP synthase subunit alpha of Actinobacillus succinogenes (strain ATCC 55618 / DSM 22257 / CCUG 43843 / 130Z).